The following is a 462-amino-acid chain: Sensor histidine kinase RegB (462 aa).

Residues 1–25 (MILGPDGILNRDTRGDWVRLRTLIL) lie on the Cytoplasmic side of the membrane. Residues 26 to 45 (LRWMAVAGQLAAIVVTDWYL) form a helical membrane-spanning segment. Residues 46–51 (GVRLPM) lie on the Extracellular side of the membrane. Residues 52–70 (GLCFMAVGASVIANVIATF) form a helical membrane-spanning segment. Residues 71–78 (VFPQNRRL) lie on the Cytoplasmic side of the membrane. Residues 79 to 96 (TEFQALMILLFDLTQLSF) form a helical membrane-spanning segment. At 97-103 (LLFLTGG) the chain is on the extracellular side. Residues 104 to 123 (LTNPFALLILAPVTISALAL) traverse the membrane as a helical segment. At 124-129 (ELRTTV) the chain is on the cytoplasmic side. A helical transmembrane segment spans residues 130–149 (ILGAIAIGLLTFTAYFHLPL). Over 150-164 (ILADGSSLSVPRMFE) the chain is Extracellular. A helical transmembrane segment spans residues 165–182 (FGFWLAIVIGILFLGLYS). Residues 183–462 (RRVAIEIRSM…PLGENVLIQT (280 aa)) lie on the Cytoplasmic side of the membrane. Positions 218–445 (AAAHELGTPL…IVEVIWPVDR (228 aa)) constitute a Histidine kinase domain. Phosphohistidine; by autocatalysis is present on H221.

The protein resides in the cell inner membrane. It catalyses the reaction ATP + protein L-histidine = ADP + protein N-phospho-L-histidine.. In terms of biological role, member of the two-component regulatory system RegB/RegA. Involved in the positive regulation of photosynthesis gene expression in response to anaerobiosis. Also involved in positive regulation of the cbbI and cbbII Calvin cycle CO2 fixation operons, as well as in regulation of expression of genes involved in alternative CO2 fixation pathways. Phosphorylates RegA/PrrA. The protein is Sensor histidine kinase RegB (regB) of Cereibacter sphaeroides (strain ATCC 17023 / DSM 158 / JCM 6121 / CCUG 31486 / LMG 2827 / NBRC 12203 / NCIMB 8253 / ATH 2.4.1.) (Rhodobacter sphaeroides).